The following is a 107-amino-acid chain: Nucleoid-associated protein PPA0205 (107 aa).

This sequence belongs to the YbaB/EbfC family. In terms of assembly, homodimer.

It is found in the cytoplasm. The protein resides in the nucleoid. Binds to DNA and alters its conformation. May be involved in regulation of gene expression, nucleoid organization and DNA protection. The polypeptide is Nucleoid-associated protein PPA0205 (Cutibacterium acnes (strain DSM 16379 / KPA171202) (Propionibacterium acnes)).